The sequence spans 168 residues: Photosystem I assembly protein Ycf3 (168 aa).

TPR repeat units lie at residues 35–68, 72–105, and 120–153; these read AFTY…EIDP, SYIL…NPFL, and GEQA…TPGN.

The protein belongs to the Ycf3 family.

It is found in the plastid. The protein localises to the chloroplast thylakoid membrane. Functionally, essential for the assembly of the photosystem I (PSI) complex. May act as a chaperone-like factor to guide the assembly of the PSI subunits. The chain is Photosystem I assembly protein Ycf3 from Piper cenocladum (Ant piper).